The sequence spans 341 residues: Malate dehydrogenase 2, mitochondrial (341 aa).

The N-terminal 22 residues, 1–22 (MFRSMIVRSASPVKQGLLRRGF), are a transit peptide targeting the mitochondrion. Residues 36–42 (GAAGGIG) and D62 contribute to the NAD(+) site. Substrate-binding residues include R109 and R115. NAD(+) contacts are provided by residues N122 and 145 to 147 (ISN). Positions 147 and 181 each coordinate substrate. The Proton acceptor role is filled by H205. Residue M256 coordinates NAD(+).

It belongs to the LDH/MDH superfamily. MDH type 1 family. In terms of assembly, homodimer. Expressed in rosette leaves at low levels.

It is found in the mitochondrion matrix. It catalyses the reaction (S)-malate + NAD(+) = oxaloacetate + NADH + H(+). Its function is as follows. Catalyzes a reversible NAD-dependent dehydrogenase reaction involved in central metabolism and redox homeostasis between organelle compartments. Required for carbon dioxide and energy partitioning in leaves. May limit photorespiration during the dark phase. Can convert 2-ketoglutarate to L-2-hydroxyglutarate in vitro. This chain is Malate dehydrogenase 2, mitochondrial, found in Arabidopsis thaliana (Mouse-ear cress).